We begin with the raw amino-acid sequence, 545 residues long: CTP synthase (545 aa).

The segment at 1-266 (MTTRYIFVTG…DDLVIKRFNL (266 aa)) is amidoligase domain. Ser14 is a CTP binding site. Ser14 lines the UTP pocket. Residues 15–20 (SLGKGI) and Asp72 contribute to the ATP site. 2 residues coordinate Mg(2+): Asp72 and Glu140. Residues 147–149 (DIE), 187–192 (KTKPTQ), and Lys223 each bind CTP. UTP contacts are provided by residues 187-192 (KTKPTQ) and Lys223. 239–241 (KDV) provides a ligand contact to ATP. Positions 291-542 (TIGMVGKYIE…IAASYAYQKR (252 aa)) constitute a Glutamine amidotransferase type-1 domain. Gly352 provides a ligand contact to L-glutamine. Cys379 serves as the catalytic Nucleophile; for glutamine hydrolysis. L-glutamine-binding positions include 380–383 (LGMQ), Glu403, and Arg470. Residues His515 and Glu517 contribute to the active site.

It belongs to the CTP synthase family. In terms of assembly, homotetramer.

The catalysed reaction is UTP + L-glutamine + ATP + H2O = CTP + L-glutamate + ADP + phosphate + 2 H(+). It catalyses the reaction L-glutamine + H2O = L-glutamate + NH4(+). The enzyme catalyses UTP + NH4(+) + ATP = CTP + ADP + phosphate + 2 H(+). The protein operates within pyrimidine metabolism; CTP biosynthesis via de novo pathway; CTP from UDP: step 2/2. Its activity is regulated as follows. Allosterically activated by GTP, when glutamine is the substrate; GTP has no effect on the reaction when ammonia is the substrate. The allosteric effector GTP functions by stabilizing the protein conformation that binds the tetrahedral intermediate(s) formed during glutamine hydrolysis. Inhibited by the product CTP, via allosteric rather than competitive inhibition. Functionally, catalyzes the ATP-dependent amination of UTP to CTP with either L-glutamine or ammonia as the source of nitrogen. Regulates intracellular CTP levels through interactions with the four ribonucleotide triphosphates. This chain is CTP synthase, found in Shewanella frigidimarina (strain NCIMB 400).